The sequence spans 376 residues: Chaperone protein DnaJ (376 aa).

The J domain maps to 5 to 70 (DYYEILGVSK…QKRAAYDQYG (66 aa)). Residues 131–209 (GVTKEIRIPT…CHGHGRVERS (79 aa)) form a CR-type zinc finger. Zn(2+)-binding residues include Cys144, Cys147, Cys161, Cys164, Cys183, Cys186, Cys197, and Cys200. 4 CXXCXGXG motif repeats span residues 144–151 (CDVCHGSG), 161–168 (CPTCHGSG), 183–190 (CPHCQGRG), and 197–204 (CNKCHGHG).

It belongs to the DnaJ family. Homodimer. Zn(2+) is required as a cofactor.

It is found in the cytoplasm. Functionally, participates actively in the response to hyperosmotic and heat shock by preventing the aggregation of stress-denatured proteins and by disaggregating proteins, also in an autonomous, DnaK-independent fashion. Unfolded proteins bind initially to DnaJ; upon interaction with the DnaJ-bound protein, DnaK hydrolyzes its bound ATP, resulting in the formation of a stable complex. GrpE releases ADP from DnaK; ATP binding to DnaK triggers the release of the substrate protein, thus completing the reaction cycle. Several rounds of ATP-dependent interactions between DnaJ, DnaK and GrpE are required for fully efficient folding. Also involved, together with DnaK and GrpE, in the DNA replication of plasmids through activation of initiation proteins. In Escherichia fergusonii (strain ATCC 35469 / DSM 13698 / CCUG 18766 / IAM 14443 / JCM 21226 / LMG 7866 / NBRC 102419 / NCTC 12128 / CDC 0568-73), this protein is Chaperone protein DnaJ.